A 435-amino-acid chain; its full sequence is Metacaspase-1A (435 aa).

Disordered regions lie at residues Met-1 to Pro-46 and Tyr-106 to Gly-129. A compositionally biased stretch (pro residues) spans Ser-36–Pro-46. Catalysis depends on residues His-231 and Cys-287.

This sequence belongs to the peptidase C14B family.

Its function is as follows. Involved in cell death (apoptosis). The polypeptide is Metacaspase-1A (casA) (Neosartorya fischeri (strain ATCC 1020 / DSM 3700 / CBS 544.65 / FGSC A1164 / JCM 1740 / NRRL 181 / WB 181) (Aspergillus fischerianus)).